Reading from the N-terminus, the 645-residue chain is ATP-dependent DNA helicase Rep (645 aa).

In terms of domain architecture, UvrD-like helicase ATP-binding spans 1-280 (MSLNFSQKNA…IKMEHNYRSS (280 aa)). Residues 22 to 29 (AGAGSGKT) and Arg278 each bind ATP. Residues 281–562 (GRILKAANSL…QLMTLHASKG (282 aa)) form the UvrD-like helicase C-terminal domain.

Belongs to the helicase family. UvrD subfamily. In terms of assembly, homodimer.

The catalysed reaction is Couples ATP hydrolysis with the unwinding of duplex DNA by translocating in the 3'-5' direction.. It catalyses the reaction ATP + H2O = ADP + phosphate + H(+). Functionally, rep helicase is a single-stranded DNA-dependent ATPase involved in DNA replication; it can initiate unwinding at a nick in the DNA. It binds to the single-stranded DNA and acts in a progressive fashion along the DNA in the 3' to 5' direction. The protein is ATP-dependent DNA helicase Rep of Buchnera aphidicola subsp. Acyrthosiphon pisum (strain APS) (Acyrthosiphon pisum symbiotic bacterium).